The following is a 159-amino-acid chain: MGLFNISLLLTCLMVLAIFHSCEAQNSPQDYLAVHNDARAQVGVGPMSWDANLASRAQNYANSRAGDCNLIHSGAGENLAKGGGDFTGRAAVQLWVSERPSYNYATNQCVGGKKCRHYTQVVWRNSVRLGCGRARCNNGWWFISCNYDPVGNWIGQRPY.

A signal peptide spans 1–24 (MGLFNISLLLTCLMVLAIFHSCEA). Glutamine 25 carries the pyrrolidone carboxylic acid modification. The SCP domain maps to 32–147 (LAVHNDARAQ…NGWWFISCNY (116 aa)). Cystine bridges form between cysteine 68–cysteine 136, cysteine 109–cysteine 115, and cysteine 131–cysteine 145.

This sequence belongs to the CRISP family.

Functionally, probably involved in the defense reaction of plants against pathogens. Has antifungal activity. The protein is Pathogenesis-related leaf protein 6 (PR1B1) of Solanum lycopersicum (Tomato).